A 159-amino-acid chain; its full sequence is uncharacterized protein (159 aa).

A run of 3 helical transmembrane segments spans residues 17–37, 44–64, and 67–87; these read FFFF…NLSS, WLIV…PLPI, and FSGA…DLIA.

The protein localises to the membrane. This is an uncharacterized protein from Saccharomyces cerevisiae (strain ATCC 204508 / S288c) (Baker's yeast).